Reading from the N-terminus, the 203-residue chain is Dual-action ribosomal maturation protein DarP (203 aa).

2 disordered regions span residues 1 to 31 (MRPMTRKTRIQPIEHAVEDDDNGYDRPSKSQ) and 183 to 203 (GASDSDDEAAGDAGDDHDDEA). Over residues 186–203 (DSDDEAAGDAGDDHDDEA) the composition is skewed to acidic residues.

This sequence belongs to the DarP family.

It is found in the cytoplasm. Member of a network of 50S ribosomal subunit biogenesis factors which assembles along the 30S-50S interface, preventing incorrect 23S rRNA structures from forming. Promotes peptidyl transferase center (PTC) maturation. This Burkholderia cenocepacia (strain ATCC BAA-245 / DSM 16553 / LMG 16656 / NCTC 13227 / J2315 / CF5610) (Burkholderia cepacia (strain J2315)) protein is Dual-action ribosomal maturation protein DarP.